Consider the following 336-residue polypeptide: Holliday junction branch migration complex subunit RuvB (336 aa).

The segment at 4 to 184 (ADRLISAGAT…FGIVQRLEFY (181 aa)) is large ATPase domain (RuvB-L). Residues Ile-23, Arg-24, Gly-65, Lys-68, Thr-69, Thr-70, 131 to 133 (EDY), Arg-174, Tyr-184, and Arg-221 contribute to the ATP site. Thr-69 is a Mg(2+) binding site. The small ATPAse domain (RuvB-S) stretch occupies residues 185-255 (QVPDLQHIVG…IAAQALDMLN (71 aa)). A head domain (RuvB-H) region spans residues 258–336 (AEGFDYMDRK…HFGITPPEMP (79 aa)). DNA contacts are provided by Arg-294, Arg-313, and Arg-318.

Belongs to the RuvB family. Homohexamer. Forms an RuvA(8)-RuvB(12)-Holliday junction (HJ) complex. HJ DNA is sandwiched between 2 RuvA tetramers; dsDNA enters through RuvA and exits via RuvB. An RuvB hexamer assembles on each DNA strand where it exits the tetramer. Each RuvB hexamer is contacted by two RuvA subunits (via domain III) on 2 adjacent RuvB subunits; this complex drives branch migration. In the full resolvosome a probable DNA-RuvA(4)-RuvB(12)-RuvC(2) complex forms which resolves the HJ.

It is found in the cytoplasm. The catalysed reaction is ATP + H2O = ADP + phosphate + H(+). The RuvA-RuvB-RuvC complex processes Holliday junction (HJ) DNA during genetic recombination and DNA repair, while the RuvA-RuvB complex plays an important role in the rescue of blocked DNA replication forks via replication fork reversal (RFR). RuvA specifically binds to HJ cruciform DNA, conferring on it an open structure. The RuvB hexamer acts as an ATP-dependent pump, pulling dsDNA into and through the RuvAB complex. RuvB forms 2 homohexamers on either side of HJ DNA bound by 1 or 2 RuvA tetramers; 4 subunits per hexamer contact DNA at a time. Coordinated motions by a converter formed by DNA-disengaged RuvB subunits stimulates ATP hydrolysis and nucleotide exchange. Immobilization of the converter enables RuvB to convert the ATP-contained energy into a lever motion, pulling 2 nucleotides of DNA out of the RuvA tetramer per ATP hydrolyzed, thus driving DNA branch migration. The RuvB motors rotate together with the DNA substrate, which together with the progressing nucleotide cycle form the mechanistic basis for DNA recombination by continuous HJ branch migration. Branch migration allows RuvC to scan DNA until it finds its consensus sequence, where it cleaves and resolves cruciform DNA. This Salmonella choleraesuis (strain SC-B67) protein is Holliday junction branch migration complex subunit RuvB.